Consider the following 103-residue polypeptide: MSFKQLLYNLPTHLCCGLIHLYRWTISPLLGSPCRFFPSCSQYALQALKHHKCIRGLWLTIKRIGKCGPWHPGGIDLVPMTTLEEALDVSQVTNDDDSGDSHA.

The protein belongs to the UPF0161 family.

Its subcellular location is the cell inner membrane. Could be involved in insertion of integral membrane proteins into the membrane. The sequence is that of Putative membrane protein insertion efficiency factor from Chlamydia abortus (strain DSM 27085 / S26/3) (Chlamydophila abortus).